The sequence spans 124 residues: Large ribosomal subunit protein eL31 (124 aa).

Residue Tyr-102 is modified to Phosphotyrosine.

This sequence belongs to the eukaryotic ribosomal protein eL31 family.

The sequence is that of Large ribosomal subunit protein eL31 (RpL31) from Drosophila melanogaster (Fruit fly).